The sequence spans 272 residues: ATP synthase subunit a (272 aa).

5 helical membrane passes run 41–61 (TLNI…LALF), 102–122 (IAPL…MDLV), 147–167 (DVNI…FYSI), 212–232 (LFGN…LLPW), and 243–263 (AIFH…LTIV).

This sequence belongs to the ATPase A chain family. As to quaternary structure, F-type ATPases have 2 components, CF(1) - the catalytic core - and CF(0) - the membrane proton channel. CF(1) has five subunits: alpha(3), beta(3), gamma(1), delta(1), epsilon(1). CF(0) has three main subunits: a(1), b(2) and c(9-12). The alpha and beta chains form an alternating ring which encloses part of the gamma chain. CF(1) is attached to CF(0) by a central stalk formed by the gamma and epsilon chains, while a peripheral stalk is formed by the delta and b chains.

It localises to the cell inner membrane. Its function is as follows. Key component of the proton channel; it plays a direct role in the translocation of protons across the membrane. The sequence is that of ATP synthase subunit a from Edwardsiella ictaluri (strain 93-146).